The primary structure comprises 1122 residues: Histone deacetylase 5 (1122 aa).

The segment at 1–24 is disordered; the sequence is MNSPNESDGMSGREPSLEILPRTS. Lys35 participates in a covalent cross-link: Glycyl lysine isopeptide (Lys-Gly) (interchain with G-Cter in SUMO2). 2 disordered regions span residues 41–60 and 196–281; these read AMPS…VELR and KEPT…SSPL. Over residues 247-258 the composition is skewed to basic and acidic residues; it reads DSRDDFPLRKTA. At Ser259 the chain carries Phosphoserine; by AMPK, CaMK1, SIK1 and PKD/PRKD1. The segment covering 272–281 has biased composition (basic and acidic residues); it reads KVAERRSSPL. At Thr292 the chain carries Phosphothreonine; by PKC. Disordered regions lie at residues 302–343 and 481–504; these read GAGP…NIPT and MRTV…LPQS. Low complexity predominate over residues 312 to 327; that stretch reads NSAPGSGPSSPNSSHS. Residues 328–340 show a composition bias toward polar residues; that stretch reads TIAENGFTGSVPN. The segment covering 494–504 has biased composition (low complexity); that stretch reads SRTQSSPLPQS. Ser498 is subject to Phosphoserine; by AMPK, CaMK1, SIK1 and PKD/PRKD1. Lys533 carries the N6-acetyllysine modification. A disordered region spans residues 536-625; the sequence is TKTGELPRQP…GPDLEEPGAG (90 aa). The segment covering 581–621 has biased composition (acidic residues); it reads STQEDLEEEDEEDDGEEEEDCIQVKDEEGESGAEEGPDLEE. Residues Ser611 and Ser661 each carry the phosphoserine modification. Residues 684-1028 form a histone deacetylase region; the sequence is GVVYDTFMLK…VSALLSVELQ (345 aa). Cys696, Cys698, His704, and Cys781 together coordinate Zn(2+). His833 is a catalytic residue. A Nuclear export signal motif is present at residues 1081–1122; that stretch reads EEAETVSAMALLSVGAEQAQAAAAREHSPRPAEEPMEQEPAL. The tract at residues 1097 to 1122 is disordered; sequence EQAQAAAAREHSPRPAEEPMEQEPAL. The span at 1104–1113 shows a compositional bias: basic and acidic residues; it reads AREHSPRPAE. Ser1108 is modified (phosphoserine).

Belongs to the histone deacetylase family. HD type 2 subfamily. As to quaternary structure, interacts with AHRR, BAHD1, BCOR, HDAC7, HDAC9, CTBP1, MEF2C, NCOR2, NRIP1, PHB2 and a 14-3-3 chaperone protein. Interacts with BCL6, DDIT3/CHOP, GRK5, KDM5B and MYOCD. Interacts with EP300 in the presence of TFAP2C. Interacts with ANKRA2. Interacts with CUL7 (as part of the 3M complex); negatively regulated by ANKRA2. Interacts with ZBTB7B; the interaction allows the recruitment of HDAC4 on CD8 loci for deacetylation and possible inhibition of CD8 genes expression. Interacts with RARA. Post-translationally, phosphorylated by AMPK, CaMK1, SIK1 and PRKD1 at Ser-259 and Ser-498. The phosphorylation is required for the export to the cytoplasm and inhibition. Phosphorylated by the PKC kinases PKN1 and PKN2, impairing nuclear import. Phosphorylated by GRK5, leading to nuclear export of HDAC5 and allowing MEF2-mediated transcription. Ubiquitinated. Polyubiquitination however does not lead to its degradation. Ubiquitous.

It is found in the nucleus. The protein localises to the cytoplasm. It carries out the reaction N(6)-acetyl-L-lysyl-[histone] + H2O = L-lysyl-[histone] + acetate. Functionally, responsible for the deacetylation of lysine residues on the N-terminal part of the core histones (H2A, H2B, H3 and H4). Histone deacetylation gives a tag for epigenetic repression and plays an important role in transcriptional regulation, cell cycle progression and developmental events. Histone deacetylases act via the formation of large multiprotein complexes. Involved in muscle maturation by repressing transcription of myocyte enhancer MEF2C. During muscle differentiation, it shuttles into the cytoplasm, allowing the expression of myocyte enhancer factors. Involved in the MTA1-mediated epigenetic regulation of ESR1 expression in breast cancer. Serves as a corepressor of RARA and causes its deacetylation. In association with RARA, plays a role in the repression of microRNA-10a and thereby in the inflammatory response. This Homo sapiens (Human) protein is Histone deacetylase 5 (HDAC5).